A 1671-amino-acid chain; its full sequence is AF4/FMR2 family member lilli (1671 aa).

6 disordered regions span residues 53–79 (YSQNYNMEEYERRKRREREKIERQQGI), 126–304 (SAPG…EKDV), 393–599 (LAGE…SNKW), 723–761 (DSGTSASGSSSSSSSSSDSAVGGEVVPMPGPGETFQLPG), 774–1162 (PTQS…TTPH), and 1185–1311 (KLTP…LQIG). The segment covering 70 to 79 (REKIERQQGI) has biased composition (basic and acidic residues). Low complexity-rich tracts occupy residues 145 to 179 (SLGHSPSSASSAAGPTSASATTALPGQQQHYQQQQ) and 210 to 242 (PSSSGMAPPRGPPRSSSSNSNSSSATNNASSGG). Threonine 416 bears the Phosphothreonine mark. A compositionally biased stretch (basic and acidic residues) spans 424 to 437 (LKTEKNHSLEKQDS). Residues 439–450 (LENDLELSESED) are compositionally biased toward acidic residues. A phosphoserine mark is found at serine 446 and serine 448. The segment covering 459–479 (SAGNSSNSSESDSSESGSESS) has biased composition (low complexity). Residues 487–496 (HPNHQQHHHQ) show a composition bias toward basic residues. 2 stretches are compositionally biased toward low complexity: residues 497 to 522 (LQQQQQASMQQQQVLQQQQQHRPQPL) and 561 to 587 (PAGVNSSAVMGAGSVSGGTLSSGGSSS). Residues 588-599 (NKTPSPTESNKW) are compositionally biased toward polar residues. A compositionally biased stretch (low complexity) spans 723–755 (DSGTSASGSSSSSSSSSDSAVGGEVVPMPGPGE). Residues 774-786 (PTQSQKAPPSNSV) are compositionally biased toward polar residues. The span at 800 to 810 (QRQKKPRKKKA) shows a compositional bias: basic residues. Serine 819 and serine 820 each carry phosphoserine. A DNA-binding region (a.T hook) is located at residues 849 to 861 (KKGRGRPRKQQQS). Residues 858 to 896 (QQQSGGSGNLSSASAGSSSQTKGPTLTAAKKPLAKTPLA) show a composition bias toward low complexity. 2 positions are modified to phosphoserine: serine 869 and serine 871. The segment covering 907–917 (SQSSSNGNTPT) has biased composition (polar residues). 2 stretches are compositionally biased toward low complexity: residues 947–963 (SSSAESSSKSSSSSSSS) and 988–1002 (ALLGSGSSSASSSGS). The segment covering 1009-1020 (SRSQVGSGQALA) has biased composition (polar residues). Low complexity predominate over residues 1032–1058 (SQHSQHLSSSECSSSSGGCTAVCSSSS). Residues 1063–1080 (EGRREKERERKPKSDKNK) are compositionally biased toward basic and acidic residues. The segment covering 1120–1130 (QPPPPHAPPAA) has biased composition (pro residues). Over residues 1188–1203 (PAQQNGHLTPKDQATN) the composition is skewed to polar residues. Composition is skewed to basic and acidic residues over residues 1224–1241 (EHPVKPEPELDAGYEAKF) and 1250–1280 (FQLKQERDRDRERERERERERERDREREQPP). At serine 1360 the chain carries Phosphoserine. Phosphothreonine is present on threonine 1362. The segment covering 1562–1581 (NTPSSISPSNSVGSQGSGSN) has biased composition (low complexity). The interval 1562–1586 (NTPSSISPSNSVGSQGSGSNTPPGR) is disordered.

It belongs to the AF4 family.

The protein localises to the nucleus. In terms of biological role, has a role in transcriptional regulation. Acts in parallel with the Ras/MAPK and the PI3K/PKB pathways in the control of cell identity and cellular growth. Essential for regulation of the cytoskeleton and cell growth but not for cell proliferation or growth rate. Required specifically for the microtubule-based basal transport of lipid droplets. Plays a partially redundant function downstream of Raf in cell fate specification in the developing eye. Pair-rule protein that regulates embryonic cellularization, gastrulation and segmentation. The polypeptide is AF4/FMR2 family member lilli (Drosophila yakuba (Fruit fly)).